The primary structure comprises 244 residues: Phosphoribosylaminoimidazole-succinocarboxamide synthase (244 aa).

This sequence belongs to the SAICAR synthetase family.

It catalyses the reaction 5-amino-1-(5-phospho-D-ribosyl)imidazole-4-carboxylate + L-aspartate + ATP = (2S)-2-[5-amino-1-(5-phospho-beta-D-ribosyl)imidazole-4-carboxamido]succinate + ADP + phosphate + 2 H(+). Its pathway is purine metabolism; IMP biosynthesis via de novo pathway; 5-amino-1-(5-phospho-D-ribosyl)imidazole-4-carboxamide from 5-amino-1-(5-phospho-D-ribosyl)imidazole-4-carboxylate: step 1/2. In Prochlorococcus marinus (strain SARG / CCMP1375 / SS120), this protein is Phosphoribosylaminoimidazole-succinocarboxamide synthase.